The following is a 142-amino-acid chain: Hemoglobin subunit alpha-1 (142 aa).

The region spanning 2-142 is the Globin domain; sequence VLSAADKSNV…VSTVLTSKYR (141 aa). Residue His-59 coordinates O2. His-88 contacts heme b.

The protein belongs to the globin family. Heterotetramer of two alpha chains and two beta chains.

In terms of biological role, involved in oxygen transport from the lung to the various peripheral tissues. Functionally, hemopressin acts as an antagonist peptide of the cannabinoid receptor CNR1. Hemopressin-binding efficiently blocks cannabinoid receptor CNR1 and subsequent signaling. This chain is Hemoglobin subunit alpha-1 (HBA1), found in Capra hircus (Goat).